The primary structure comprises 159 residues: MKITVVCVGKIKEKYLTMAIEEYSKRLSRYCKLEIIELADEKTPDNASPAEELQIKKKEGERILKNIKDNAYVIALAIEGKMLSSEELADKMQLLGVNGESHLAFVIGGSLGLDSEVLDRADFKLSFSKMTFPHQVMRTILLEQVYRGFRIMSGEPYHK.

Residues L76, G108, and 127–132 (FSKMTF) contribute to the S-adenosyl-L-methionine site.

It belongs to the RNA methyltransferase RlmH family. In terms of assembly, homodimer.

Its subcellular location is the cytoplasm. The enzyme catalyses pseudouridine(1915) in 23S rRNA + S-adenosyl-L-methionine = N(3)-methylpseudouridine(1915) in 23S rRNA + S-adenosyl-L-homocysteine + H(+). Specifically methylates the pseudouridine at position 1915 (m3Psi1915) in 23S rRNA. The chain is Ribosomal RNA large subunit methyltransferase H from Lachnoclostridium phytofermentans (strain ATCC 700394 / DSM 18823 / ISDg) (Clostridium phytofermentans).